A 240-amino-acid polypeptide reads, in one-letter code: MVRIQDLSLAFNGQTLFEHLNLTLLPNEWVSLLGSSGVGKSTLLRLLAGIETQGMVQGKILFEPKVRIAWLPQKETLYPWLSIVDNVQLQAVLFGRKSVKTTEKAKMLLEKVGMAAHWHKPCSQLSGGQKQRVALARTLMQEVDLILLDEPFSALDAISRHQLQDLAFELLEDKSVLLVTHDPQEALRLSQRIFVLRSPETHQTALSAVILPEGNAPRELHQANLWTLQQQLLQELGGEQ.

Positions 2-223 (VRIQDLSLAF…GNAPRELHQA (222 aa)) constitute an ABC transporter domain. Residue 34-41 (GSSGVGKS) coordinates ATP.

It belongs to the ABC transporter superfamily.

This is an uncharacterized protein from Haemophilus influenzae (strain ATCC 51907 / DSM 11121 / KW20 / Rd).